Here is a 352-residue protein sequence, read N- to C-terminus: D-alanine--D-alanine ligase (352 aa).

An ATP-grasp domain is found at 135-344 (KTVFAKAGLP…FPQLVDRLIE (210 aa)). 171–226 (EETLNYPCFVKPANLGSSVGIAKVRSRSELEKALDQAASYDRRIIVEAGVIAREVE) provides a ligand contact to ATP. Residues aspartate 297, glutamate 311, and asparagine 313 each coordinate Mg(2+).

It belongs to the D-alanine--D-alanine ligase family. Mg(2+) serves as cofactor. The cofactor is Mn(2+).

It is found in the cytoplasm. It carries out the reaction 2 D-alanine + ATP = D-alanyl-D-alanine + ADP + phosphate + H(+). It functions in the pathway cell wall biogenesis; peptidoglycan biosynthesis. In terms of biological role, cell wall formation. This chain is D-alanine--D-alanine ligase, found in Gloeothece citriformis (strain PCC 7424) (Cyanothece sp. (strain PCC 7424)).